Consider the following 505-residue polypeptide: Gap junction alpha-10 protein (505 aa).

At Met1 to Ser16 the chain is on the cytoplasmic side. Residues His17 to Leu37 traverse the membrane as a helical segment. Residues Gly38–Arg76 are Extracellular-facing. A helical membrane pass occupies residues Phe77 to Leu97. Over Tyr98–Ser165 the chain is Cytoplasmic. The chain crosses the membrane as a helical span at residues Val166–Ile186. Over Tyr187–Thr209 the chain is Extracellular. A helical transmembrane segment spans residues Ile210–Ile230. The Cytoplasmic portion of the chain corresponds to Phe231 to Tyr505. The span at Thr371–Leu383 shows a compositional bias: polar residues. The tract at residues Thr371–Pro491 is disordered. Positions Met437–Asp446 are enriched in basic and acidic residues. Residues Ser447 to Phe460 show a composition bias toward low complexity.

This sequence belongs to the connexin family. Alpha-type (group II) subfamily. As to quaternary structure, a connexon is composed of a hexamer of connexins. In terms of tissue distribution, low levels were detected in skin, heart, kidney, testis, ovary, intestine. Expression not detected in brain, sciatic nerve or liver. According to PubMed:15147297 expression is detected only in horizontal cells in the inner nuclear layer of the retina and not in other neurons of the central nervous system or tissues. Detected in the outer plexiform layer of the retina (at protein level).

It is found in the cell membrane. It localises to the cell junction. The protein resides in the gap junction. In terms of biological role, one gap junction consists of a cluster of closely packed pairs of transmembrane channels, the connexons, through which materials of low MW diffuse from one cell to a neighboring cell. Involved in tracer coupling between horizontal cells of the retina. May play a role in the regulation of horizontal cell patterning. This Mus musculus (Mouse) protein is Gap junction alpha-10 protein (Gja10).